A 134-amino-acid polypeptide reads, in one-letter code: MTNIRKTHPLLKIINNSLVDLPAPSNLSSWWNFGSLLGVCLAVQILTGVFLAMHYTSDTTSAFNSVAHICRDVNYGWVLRYLHANGASMFFICLYVHVGRGLYYGSYMYSETWNVGILLLFAVMATAFMGYVLP.

The next 3 helical transmembrane spans lie at Phe33–Met53, Trp77–Val98, and Trp113–Leu133. 2 residues coordinate heme b: His83 and His97.

This sequence belongs to the cytochrome b family. The cytochrome bc1 complex contains 11 subunits: 3 respiratory subunits (MT-CYB, CYC1 and UQCRFS1), 2 core proteins (UQCRC1 and UQCRC2) and 6 low-molecular weight proteins (UQCRH/QCR6, UQCRB/QCR7, UQCRQ/QCR8, UQCR10/QCR9, UQCR11/QCR10 and a cleavage product of UQCRFS1). This cytochrome bc1 complex then forms a dimer. Heme b serves as cofactor.

The protein localises to the mitochondrion inner membrane. In terms of biological role, component of the ubiquinol-cytochrome c reductase complex (complex III or cytochrome b-c1 complex) that is part of the mitochondrial respiratory chain. The b-c1 complex mediates electron transfer from ubiquinol to cytochrome c. Contributes to the generation of a proton gradient across the mitochondrial membrane that is then used for ATP synthesis. This Anoura caudifer (Hairy-legged long-tongued bat) protein is Cytochrome b (MT-CYB).